The sequence spans 258 residues: L-aminoadipate-semialdehyde dehydrogenase-phosphopantetheinyl transferase (258 aa).

It belongs to the P-Pant transferase superfamily. AcpS family.

The protein resides in the cytoplasm. It localises to the nucleus. It catalyses the reaction apo-[ACP] + CoA = holo-[ACP] + adenosine 3',5'-bisphosphate + H(+). In terms of biological role, catalyzes the transfer of a 4'-phosphopantetheine moiety from coenzyme A to a serine residue of acceptor proteins, such as alpha-aminoadipate reductase. Necessary for alpha-aminoadipate reductase activity. In Schizosaccharomyces pombe (strain 972 / ATCC 24843) (Fission yeast), this protein is L-aminoadipate-semialdehyde dehydrogenase-phosphopantetheinyl transferase (lys7).